Here is a 453-residue protein sequence, read N- to C-terminus: Zinc finger CCCH domain-containing protein 26 (453 aa).

Positions 1-15 (MSETQQQVQNSTGSI) are enriched in polar residues. The disordered stretch occupies residues 1-47 (MSETQQQVQNSTGSIRSPDKIEDTFRRMKVNEDNMEQSSPYPDRPGE). Ser2 is subject to N-acetylserine. Positions 17–32 (SPDKIEDTFRRMKVNE) are enriched in basic and acidic residues. 5 C3H1-type zinc fingers span residues 44–72 (RPGE…HPLT), 95–112 (ETGA…HPKD), 129–157 (RQGE…HPHP), 261–289 (FSER…HPKE), and 307–335 (RPGQ…HSML). Positions 360 to 379 (STNLRISSPPSPSDMTTLSN) are enriched in polar residues. The disordered stretch occupies residues 360–453 (STNLRISSPP…KVQDSSDKST (94 aa)). Residues 391–407 (ETEKQDDSPTEPEKSEV) show a composition bias toward basic and acidic residues. The segment covering 413–422 (PNGSDSTSLP) has biased composition (polar residues). Residues 441–453 (DSSKVQDSSDKST) show a composition bias toward basic and acidic residues.

It is found in the nucleus. The polypeptide is Zinc finger CCCH domain-containing protein 26 (ZFN2) (Arabidopsis thaliana (Mouse-ear cress)).